A 1681-amino-acid chain; its full sequence is Probable clathrin heavy chain 1 (1681 aa).

WD40-like repeat regions lie at residues 22 to 65, 66 to 105, 106 to 147, 148 to 193, 194 to 255, 256 to 299, and 300 to 328; these read NITF…RPIS, ADSVIMHPTAKILALKSGKTLQIFNIELKAKVKAHQNVED, VVYW…QSLA, GTQI…QPIE, GHAA…ADTA, GDFP…ISTD, and TVFVTCEYTATGGIMGINRKGQVLSVSID. CHCR repeat units lie at residues 539-685, 688-830, 835-974, 981-1126, 1130-1271, 1276-1422, and 1425-1568; these read SENG…QVVV, ASKY…SEDA, IINT…QLID, LSET…VKEA, FIKA…FRLA, LHIV…LLLN, and LTVL…YDCF. The span at 1616 to 1628 shows a compositional bias: basic and acidic residues; sequence ERSEHERKEEKAE. Residues 1616 to 1635 are disordered; that stretch reads ERSEHERKEEKAEQQQNNGM.

This sequence belongs to the clathrin heavy chain family. As to quaternary structure, clathrin triskelions, composed of 3 heavy chains and 3 light chains, are the basic subunits of the clathrin coat. May interact with beta arrestin arr-1.

The protein resides in the cytoplasmic vesicle membrane. The protein localises to the membrane. Its subcellular location is the coated pit. Functionally, clathrin is the major protein of the polyhedral coat of coated pits and vesicles. May play a role in yolk protein clatherin-mediated endocytosis by oocytes during oogenesis. The polypeptide is Probable clathrin heavy chain 1 (chc-1) (Caenorhabditis elegans).